The primary structure comprises 156 residues: MPRRGPVAKRDVLPDPIYNSKLVTRLINKIMIDGKKSKAQKILYTAFDIIRERTGKDPMEVFEQALKNVMPVLEVRARRVGGANYQVPVEVRPDRRVSLGLRWLVQYARLRNEKTMEERLANEIMDAANNTGAAVKKREDTHKMAEANRAFAHYRW.

Belongs to the universal ribosomal protein uS7 family. In terms of assembly, part of the 30S ribosomal subunit. Contacts proteins S9 and S11.

Functionally, one of the primary rRNA binding proteins, it binds directly to 16S rRNA where it nucleates assembly of the head domain of the 30S subunit. Is located at the subunit interface close to the decoding center, probably blocks exit of the E-site tRNA. This is Small ribosomal subunit protein uS7 from Geobacillus kaustophilus (strain HTA426).